The chain runs to 856 residues: Centrosomal protein of 97 kDa (856 aa).

LRR repeat units lie at residues 37–58 (DVHT…EKCK), 59–80 (QLIQ…AKLT), 81–102 (QLRV…KDLV), 103–124 (HLEW…NSCT), 125–146 (ALQH…SKLI), 147–168 (SLKT…PAYL), 171–192 (NLSI…SFLA), and 196–205 (ELEQLSIMNN). One can recognise an LRRCT domain in the interval 211–249 (TPSIPGFDYRPFIVSWCLNLRVLDGYVISQKESLKAEWL). The interval 300–742 (HQRQLMSQSQ…KCVKDRDSEA (443 aa)) is CCP110-binding. Serine 308 and serine 410 each carry phosphoserine. The disordered stretch occupies residues 430 to 451 (DDGADEFTKGLENQDEDKDKEK). Serine 497 is modified (phosphoserine). Residues 498 to 513 (LTSLPESAGHSASRTE) show a composition bias toward polar residues. Positions 498-525 (LTSLPESAGHSASRTEANSEEAMSPATS) are disordered. Position 521 is a phosphoserine (serine 521). Residue threonine 534 is modified to Phosphothreonine. Positions 550–579 (LNAAATKLQACWRGFYTRNYNQQAKGVRYE) constitute an IQ domain. Residues 579–853 (EIRLRRMQEH…FQGLHVGVTV (275 aa)) form an interaction with MPHOSPH9 region. Disordered regions lie at residues 646-672 (PPIS…DQSS) and 737-840 (DRDS…PPEC). The span at 737 to 752 (DRDSEATAEEHSDCSR) shows a compositional bias: basic and acidic residues. Residues 753–773 (ESSASEQDNTLLQQYLTSVQQ) are compositionally biased toward polar residues. Serine 755 is modified (phosphoserine). A compositionally biased stretch (acidic residues) spans 776–787 (DAAEAADSDDVA). The span at 799-811 (ERFDASSDSETHR) shows a compositional bias: basic and acidic residues. The span at 812-833 (VASTSQDEISQTPENCQLNEEA) shows a compositional bias: polar residues.

In terms of assembly, interacts with CALM1, CEP76, KIF24 and TALPID3. Interacts with CCP110. ENKD1 competes with CEP97 for binding to CCP110, destabilizing the interaction between CP110 and CEP97 which promotes the removal of CCP110 and CEP97 from the mother centriole and allows the initiation of ciliogenesis. Via its interaction with CCP110, may indirectly interact with HERC2 and NEURL4. Interacts with MPHOSPH9.

It localises to the cytoplasm. It is found in the cytoskeleton. The protein localises to the microtubule organizing center. The protein resides in the centrosome. Its subcellular location is the centriole. Its function is as follows. Acts as a key negative regulator of ciliogenesis in collaboration with CCP110 by capping the mother centriole thereby preventing cilia formation. Required for recruitment of CCP110 to the centrosome. The protein is Centrosomal protein of 97 kDa (Cep97) of Mus musculus (Mouse).